The sequence spans 124 residues: Small ribosomal subunit protein uS12 (124 aa).

3-methylthioaspartic acid is present on aspartate 89.

Belongs to the universal ribosomal protein uS12 family. Part of the 30S ribosomal subunit. Contacts proteins S8 and S17. May interact with IF1 in the 30S initiation complex.

With S4 and S5 plays an important role in translational accuracy. Its function is as follows. Interacts with and stabilizes bases of the 16S rRNA that are involved in tRNA selection in the A site and with the mRNA backbone. Located at the interface of the 30S and 50S subunits, it traverses the body of the 30S subunit contacting proteins on the other side and probably holding the rRNA structure together. The combined cluster of proteins S8, S12 and S17 appears to hold together the shoulder and platform of the 30S subunit. The polypeptide is Small ribosomal subunit protein uS12 (Shewanella loihica (strain ATCC BAA-1088 / PV-4)).